A 91-amino-acid polypeptide reads, in one-letter code: Elongation factor 1-beta (91 aa).

In terms of assembly, homodimer.

In terms of biological role, promotes the exchange of GDP for GTP in EF-1-alpha/GDP, thus allowing the regeneration of EF-1-alpha/GTP that could then be used to form the ternary complex EF-1-alpha/GTP/AAtRNA. In Saccharolobus solfataricus (strain ATCC 35092 / DSM 1617 / JCM 11322 / P2) (Sulfolobus solfataricus), this protein is Elongation factor 1-beta (ef1b).